A 322-amino-acid polypeptide reads, in one-letter code: uncharacterized protein (322 aa).

The N-terminal stretch at 1-27 (MKRLFWNLKHKKAWLVLLLGTGMILSS) is a signal peptide. Cysteine 28 carries N-palmitoyl cysteine lipidation. A lipid anchor (S-diacylglycerol cysteine) is attached at cysteine 28. Polar residues predominate over residues 235-254 (DNSTNPNAPGSGQGDSTPPA). The interval 235–298 (DNSTNPNAPG…AVQRSQKSYG (64 aa)) is disordered. The span at 257–267 (GEGGGSDGSSG) shows a compositional bias: gly residues. The segment covering 274–296 (NGQNTTPTSPQSSQPAVQRSQKS) has biased composition (polar residues).

The protein resides in the cell membrane. This is an uncharacterized protein from Mycoplasma genitalium (strain ATCC 33530 / DSM 19775 / NCTC 10195 / G37) (Mycoplasmoides genitalium).